The primary structure comprises 512 residues: Probable cytochrome P450 6d2 (512 aa).

Cysteine 457 is a binding site for heme.

The protein belongs to the cytochrome P450 family. It depends on heme as a cofactor.

It localises to the endoplasmic reticulum membrane. Its subcellular location is the microsome membrane. In terms of biological role, may be involved in the metabolism of insect hormones and in the breakdown of synthetic insecticides. The protein is Probable cytochrome P450 6d2 (Cyp6d2) of Drosophila melanogaster (Fruit fly).